Consider the following 131-residue polypeptide: Putative protein PTGES3L (131 aa).

The CS domain maps to 3–91 (RQPARTLWYD…KEKVAWPRLT (89 aa)).

It belongs to the p23/wos2 family.

In Mus musculus (Mouse), this protein is Putative protein PTGES3L (Ptges3l).